Reading from the N-terminus, the 89-residue chain is Luqin-like RYamide peptides lury-1 (89 aa).

A signal peptide spans 1-19 (MLTRVPVLILAVIVMLALC). The propeptide occupies 20 to 26 (QEPEKPE). Tyrosine amide occurs at positions 35 and 43. Residues 47–89 (SGNLMESSQNSLTEESSDVVCQLIDGKYICLPVDAVRFRPFFL) constitute a propeptide that is removed on maturation.

As to expression, expressed in the M1 and M2 pharyngeal neurons from where the LURY-1-1 and LURY-1-2 peptides are secreted.

Its subcellular location is the secreted. Its function is as follows. Acts as a ligand for the npr-22 receptor and controls food-related processes including feeding, lifespan, egg-laying and roaming behavior. Secreted in the presence of food, leading to reduced feeding and roaming behavior and increased egg laying and lifespan. Activity may be latent under normal conditions but induced under conditions that cause hyperactivation of the pharynx such as abrupt refeeding after starvation. The sequence is that of Luqin-like RYamide peptides lury-1 from Caenorhabditis elegans.